Here is a 352-residue protein sequence, read N- to C-terminus: Anthranilate phosphoribosyltransferase (352 aa).

Residues G91, 94–95 (GD), T99, 101–104 (NIST), 119–127 (KHGNRASSS), and S131 contribute to the 5-phospho-alpha-D-ribose 1-diphosphate site. Residue G91 participates in anthranilate binding. S103 is a binding site for Mg(2+). An anthranilate-binding site is contributed by N122. R177 is an anthranilate binding site. Residues D235 and E236 each contribute to the Mg(2+) site.

Belongs to the anthranilate phosphoribosyltransferase family. Homodimer. Mg(2+) serves as cofactor.

The enzyme catalyses N-(5-phospho-beta-D-ribosyl)anthranilate + diphosphate = 5-phospho-alpha-D-ribose 1-diphosphate + anthranilate. It participates in amino-acid biosynthesis; L-tryptophan biosynthesis; L-tryptophan from chorismate: step 2/5. Functionally, catalyzes the transfer of the phosphoribosyl group of 5-phosphorylribose-1-pyrophosphate (PRPP) to anthranilate to yield N-(5'-phosphoribosyl)-anthranilate (PRA). This Arthrobacter sp. (strain FB24) protein is Anthranilate phosphoribosyltransferase.